A 1091-amino-acid chain; its full sequence is ATP-dependent helicase/deoxyribonuclease subunit B (1091 aa).

This sequence belongs to the helicase family. AddB/RexB type 2 subfamily. As to quaternary structure, heterodimer of AddA and RexB. Requires Mg(2+) as cofactor.

In terms of biological role, the heterodimer acts as both an ATP-dependent DNA helicase and an ATP-dependent, dual-direction single-stranded exonuclease. Recognizes the chi site generating a DNA molecule suitable for the initiation of homologous recombination. This subunit has 5' -&gt; 3' nuclease activity but not helicase activity. This Streptococcus pneumoniae serotype 19F (strain G54) protein is ATP-dependent helicase/deoxyribonuclease subunit B.